We begin with the raw amino-acid sequence, 346 residues long: Histidinol-phosphate aminotransferase (346 aa).

K209 is modified (N6-(pyridoxal phosphate)lysine).

This sequence belongs to the class-II pyridoxal-phosphate-dependent aminotransferase family. Histidinol-phosphate aminotransferase subfamily. As to quaternary structure, homodimer. Pyridoxal 5'-phosphate serves as cofactor.

It carries out the reaction L-histidinol phosphate + 2-oxoglutarate = 3-(imidazol-4-yl)-2-oxopropyl phosphate + L-glutamate. The protein operates within amino-acid biosynthesis; L-histidine biosynthesis; L-histidine from 5-phospho-alpha-D-ribose 1-diphosphate: step 7/9. This Flavobacterium psychrophilum (strain ATCC 49511 / DSM 21280 / CIP 103535 / JIP02/86) protein is Histidinol-phosphate aminotransferase.